Consider the following 377-residue polypeptide: Probable protein phosphatase 2C 61 (377 aa).

In terms of domain architecture, PPM-type phosphatase spans 30–338 (AAGEFSMAAA…DDITAVVVFL (309 aa)). Residues Asp-64, Gly-65, Asp-269, and Asp-329 each contribute to the Mn(2+) site.

This sequence belongs to the PP2C family. It depends on Mg(2+) as a cofactor. Mn(2+) serves as cofactor.

The catalysed reaction is O-phospho-L-seryl-[protein] + H2O = L-seryl-[protein] + phosphate. It carries out the reaction O-phospho-L-threonyl-[protein] + H2O = L-threonyl-[protein] + phosphate. In Oryza sativa subsp. japonica (Rice), this protein is Probable protein phosphatase 2C 61.